Reading from the N-terminus, the 226-residue chain is Ribose-5-phosphate isomerase A (226 aa).

Residues Thr32–Thr35, Asp85–Asp88, and Lys98–Gly101 contribute to the substrate site. Glu107 serves as the catalytic Proton acceptor. Lys125 provides a ligand contact to substrate.

This sequence belongs to the ribose 5-phosphate isomerase family. As to quaternary structure, homodimer.

It carries out the reaction aldehydo-D-ribose 5-phosphate = D-ribulose 5-phosphate. It functions in the pathway carbohydrate degradation; pentose phosphate pathway; D-ribose 5-phosphate from D-ribulose 5-phosphate (non-oxidative stage): step 1/1. Functionally, catalyzes the reversible conversion of ribose-5-phosphate to ribulose 5-phosphate. This is Ribose-5-phosphate isomerase A from Saccharophagus degradans (strain 2-40 / ATCC 43961 / DSM 17024).